We begin with the raw amino-acid sequence, 434 residues long: Asparagine--tRNA ligase (434 aa).

The protein belongs to the class-II aminoacyl-tRNA synthetase family.

It is found in the cytoplasm. The catalysed reaction is tRNA(Asn) + L-asparagine + ATP = L-asparaginyl-tRNA(Asn) + AMP + diphosphate + H(+). The polypeptide is Asparagine--tRNA ligase (asnS) (Pyrococcus furiosus (strain ATCC 43587 / DSM 3638 / JCM 8422 / Vc1)).